Reading from the N-terminus, the 113-residue chain is Hydrogenase maturation factor HypA (113 aa).

Residue H2 participates in Ni(2+) binding. C73, C76, C89, and C92 together coordinate Zn(2+).

The protein belongs to the HypA/HybF family.

In terms of biological role, involved in the maturation of [NiFe] hydrogenases. Required for nickel insertion into the metal center of the hydrogenase. The polypeptide is Hydrogenase maturation factor HypA (Alkalilimnicola ehrlichii (strain ATCC BAA-1101 / DSM 17681 / MLHE-1)).